A 3106-amino-acid chain; its full sequence is Cilia- and flagella-associated protein 54 (3106 aa).

3 stretches are compositionally biased toward low complexity: residues 1–24, 34–48, and 2356–2368; these read MASS…VSPV, STAV…KSSS, and ESCS…TSTT. Disordered regions lie at residues 1-58 and 2354-2374; these read MASS…THSE and PEES…KDDS.

This sequence belongs to the CFAP54 family. In terms of tissue distribution, expressed at high level in the testis and at a low level in the lung and brain.

It is found in the cytoplasm. It localises to the cytoskeleton. Its subcellular location is the cilium axoneme. Functionally, required for assembly and function of cilia and flagella. This chain is Cilia- and flagella-associated protein 54, found in Mus musculus (Mouse).